Reading from the N-terminus, the 493-residue chain is Proline--tRNA ligase (493 aa).

This sequence belongs to the class-II aminoacyl-tRNA synthetase family. ProS type 3 subfamily. Homodimer.

It localises to the cytoplasm. It carries out the reaction tRNA(Pro) + L-proline + ATP = L-prolyl-tRNA(Pro) + AMP + diphosphate. Functionally, catalyzes the attachment of proline to tRNA(Pro) in a two-step reaction: proline is first activated by ATP to form Pro-AMP and then transferred to the acceptor end of tRNA(Pro). The polypeptide is Proline--tRNA ligase (Parabacteroides distasonis (strain ATCC 8503 / DSM 20701 / CIP 104284 / JCM 5825 / NCTC 11152)).